The primary structure comprises 429 residues: Sex determination protein fox-1 (429 aa).

Low complexity predominate over residues 156–180; sequence ATTAGSTNGSAAVTQPDPSTSSGPD. The disordered stretch occupies residues 156 to 188; the sequence is ATTAGSTNGSAAVTQPDPSTSSGPDGPKRLHVS. The RRM domain occupies 183–259; it reads KRLHVSNIPF…RKIEVNCATA (77 aa).

As to quaternary structure, interacts with sup-12. As to expression, in males and hermaphrodites expressed in a subset of cells in the head and tail. Expressed in the pharynx, intestine and in muscles from the vulva and body wall.

The protein resides in the nucleus. In terms of biological role, RNA-binding protein that regulates tissue-specific alternative splicing events by binding to 5'-UGCAUG-3' and 5'-GCACG-3' elements. Also binds to poly(A), poly(G), poly(C), or poly(U) stretches of RNA. Plays a role in the sex determination pathway and X chromosome dosage compensation, and together with sex-1 is involved in making the distinction between one and two X-chromosomes. Binds to 5'-GCAUG-3' and 5'-GCACG-3' elements in intron 6 of the pre-mRNA of the sex-determining factor xol-1 to promote its alternative splicing and together with sex-1 negatively regulates the expression of xol-1 to promote hermaphrodite development. Negatively regulates the expression of the active isoform of xol-1 (isoform b) by promoting intron 6 retention and the deletion of exon 7 coding sequences in hermaphrodite embryos. Furthermore, binding to the pre-mRNA of xol-1 can also direct the use of an alternative 3' splice site enabling the xol-1 transcript to be trans-spliced to unrelated genes on chromosome 2, which also leads to xol-1 exon 7 deletion. Does not seem to regulate the retention of introns 1 to 5 of xol-1 pre-mRNA. Plays a role in the association of the dosage compensation complex proteins dpy-27 and sdc-3 with the hermaphrodite X chromosomes. Binds to 5'-UGCAUG-3' elements in intron 7 of the pre-mRNA of unc-32 to promote its alternative splicing in neuronal tissues. Binds to 5'-UGCAUG-3' elements in intron 4 of the pre-mRNA of egl-15 to promote its alternative splicing in body wall muscle tissues. Promotes binding of RNA-binding protein sup-12 to target RNA. Plays a role in male mating behavior. The polypeptide is Sex determination protein fox-1 (Caenorhabditis elegans).